A 704-amino-acid polypeptide reads, in one-letter code: MARQTPIARYRNIGISAHIDAGKTTTSERILFYTGVNHKIGETHEGSATMDWMEQEQERGITITSAATTAFWSGMAKQFEPHRVNIIDTPGHVDFTIEVERSMRVLDGAVMVYCAVGGVQPQSETVWRQANKYHVPRIAFVNKMDRMGANFLRVVEQIKTRLAANPVPLQIPVGAEEDFTGVVDLIKMKAIRWNEEDQGVTFEYEDIPADLQDLAEEWHNNLIESAAEASEDLMDKYLGGEELSEAEIKSALRKRVLDNEIILVTCGSAFKNKGVQAMLDAVIEYLPAPTDVPAIKGILPDGKDTPAERHSSDEEPFSALAFKIATDPFVGNLTFFRVYSGVVNSGDTVLNPVKDKKERFGRIVQMHANKREEIKEVRAGDIAAAIGLKDVTTGDTLCAIDAPIILERMEFPEPVISVAIEPKTKADQEKMGIALNRLAQEDPSFRVSSDEESGQTIIAGMGELHLDVLVDRMRREFKVEANVGKPQVAYRETIREEITDVEGKHAKQSGGRGQYGHVVIDLSPLPSGGEENYVFVNDIVGGVIPKEFIPAVDKGIQEQLKSGPLAGYPVVDIKARLHFGSYHDVDSSEIAFKIAASMAFKEGFMKAKPILLEPIMKVEIETPEDYMGDVIGDLNRRRGMVEGMDDLPTGKIIRAQVPLAEMFGYATDLRSQTQGRASYSMEFLKYNEAPSNVAQAIIEARKAK.

The 283-residue stretch at 8–290 folds into the tr-type G domain; the sequence is ARYRNIGISA…AVIEYLPAPT (283 aa). GTP is bound by residues 17–24, 88–92, and 142–145; these read AHIDAGKT, DTPGH, and NKMD.

It belongs to the TRAFAC class translation factor GTPase superfamily. Classic translation factor GTPase family. EF-G/EF-2 subfamily.

Its subcellular location is the cytoplasm. Catalyzes the GTP-dependent ribosomal translocation step during translation elongation. During this step, the ribosome changes from the pre-translocational (PRE) to the post-translocational (POST) state as the newly formed A-site-bound peptidyl-tRNA and P-site-bound deacylated tRNA move to the P and E sites, respectively. Catalyzes the coordinated movement of the two tRNA molecules, the mRNA and conformational changes in the ribosome. This is Elongation factor G from Proteus mirabilis (strain HI4320).